A 258-amino-acid polypeptide reads, in one-letter code: Phosphate import ATP-binding protein PstB 1 (258 aa).

Residues L5–K247 form the ABC transporter domain. An ATP-binding site is contributed by G37–T44.

The protein belongs to the ABC transporter superfamily. Phosphate importer (TC 3.A.1.7) family. As to quaternary structure, the complex is composed of two ATP-binding proteins (PstB), two transmembrane proteins (PstC and PstA) and a solute-binding protein (PstS).

It localises to the cell membrane. It catalyses the reaction phosphate(out) + ATP + H2O = ADP + 2 phosphate(in) + H(+). Its function is as follows. Part of the ABC transporter complex PstSACB involved in phosphate import. Responsible for energy coupling to the transport system. The chain is Phosphate import ATP-binding protein PstB 1 from Mycobacterium bovis (strain ATCC BAA-935 / AF2122/97).